Consider the following 106-residue polypeptide: Large ribosomal subunit protein eL42 (106 aa).

It belongs to the eukaryotic ribosomal protein eL42 family.

In Yarrowia lipolytica (strain CLIB 122 / E 150) (Yeast), this protein is Large ribosomal subunit protein eL42 (RPL44).